Reading from the N-terminus, the 186-residue chain is Cytochrome b6-f complex iron-sulfur subunit (186 aa).

The helical transmembrane segment at 16–38 threads the bilayer; sequence LLSFVTGGAIAATTAATLYPVVL. Residues 74–163 form the Rieske domain; the sequence is GEPVLTLGLD…ATVSDDKVLI (90 aa). Residues cysteine 109, histidine 111, cysteine 127, and histidine 130 each coordinate [2Fe-2S] cluster. Cysteine 114 and cysteine 129 are joined by a disulfide.

The protein belongs to the Rieske iron-sulfur protein family. As to quaternary structure, the 4 large subunits of the cytochrome b6-f complex are cytochrome b6, subunit IV (17 kDa polypeptide, PetD), cytochrome f and the Rieske protein, while the 4 small subunits are PetG, PetL, PetM and PetN. The complex functions as a dimer. [2Fe-2S] cluster is required as a cofactor.

The protein localises to the cell inner membrane. It catalyses the reaction 2 oxidized [plastocyanin] + a plastoquinol + 2 H(+)(in) = 2 reduced [plastocyanin] + a plastoquinone + 4 H(+)(out). Component of the cytochrome b6-f complex, which mediates electron transfer between photosystem II (PSII) and photosystem I (PSI), cyclic electron flow around PSI, and state transitions. This chain is Cytochrome b6-f complex iron-sulfur subunit, found in Gloeobacter violaceus (strain ATCC 29082 / PCC 7421).